The primary structure comprises 293 residues: Acetylglutamate kinase (293 aa).

Residues 65 to 66 (GG), Arg-87, and Asn-188 contribute to the substrate site.

It belongs to the acetylglutamate kinase family. ArgB subfamily.

The protein localises to the cytoplasm. It catalyses the reaction N-acetyl-L-glutamate + ATP = N-acetyl-L-glutamyl 5-phosphate + ADP. It participates in amino-acid biosynthesis; L-arginine biosynthesis; N(2)-acetyl-L-ornithine from L-glutamate: step 2/4. Catalyzes the ATP-dependent phosphorylation of N-acetyl-L-glutamate. The polypeptide is Acetylglutamate kinase (Symbiobacterium thermophilum (strain DSM 24528 / JCM 14929 / IAM 14863 / T)).